Consider the following 171-residue polypeptide: Lipoprotein signal peptidase (171 aa).

3 helical membrane-spanning segments follow: residues 7 to 27 (GLIALLATLALDQASKLWLYF), 64 to 84 (LGRWLLVAVSLAAVIGLSVWM), and 88 to 108 (GSRLLAVALGLIVGGALGNAI). Catalysis depends on residues Asp118 and Asp136. Residues 128-148 (SWYVFNVADAAIVAGVVGLIL) traverse the membrane as a helical segment.

The protein belongs to the peptidase A8 family.

The protein resides in the cell inner membrane. The catalysed reaction is Release of signal peptides from bacterial membrane prolipoproteins. Hydrolyzes -Xaa-Yaa-Zaa-|-(S,diacylglyceryl)Cys-, in which Xaa is hydrophobic (preferably Leu), and Yaa (Ala or Ser) and Zaa (Gly or Ala) have small, neutral side chains.. It participates in protein modification; lipoprotein biosynthesis (signal peptide cleavage). Functionally, this protein specifically catalyzes the removal of signal peptides from prolipoproteins. The polypeptide is Lipoprotein signal peptidase (Methylorubrum extorquens (strain PA1) (Methylobacterium extorquens)).